The sequence spans 462 residues: General transcription factor IIH subunit 4 (462 aa).

Belongs to the TFB2 family. Component of the 7-subunit TFIIH core complex composed of XPB/ERCC3, XPD/ERCC2, GTF2H1, GTF2H2, GTF2H3, GTF2H4 and GTF2H5, which is active in NER. The core complex associates with the 3-subunit CDK-activating kinase (CAK) module composed of CCNH/cyclin H, CDK7 and MNAT1 to form the 10-subunit holoenzyme (holo-TFIIH) active in transcription. Part of TBP-based Pol II pre-initiation complex (PIC), in which Pol II core assembles with general transcription factors and other specific initiation factors including GTF2E1, GTF2E2, GTF2F1, GTF2F2, TCEA1, ERCC2, ERCC3, GTF2H2, GTF2H3, GTF2H4, GTF2H5, GTF2A1, GTF2A2, GTF2B and TBP; this large multi-subunit PIC complex mediates DNA unwinding and targets Pol II core to the transcription start site where the first phosphodiester bond forms.

Its subcellular location is the nucleus. Component of the general transcription and DNA repair factor IIH (TFIIH) core complex, which is involved in general and transcription-coupled nucleotide excision repair (NER) of damaged DNA and, when complexed to CAK, in RNA transcription by RNA polymerase II. In NER, TFIIH acts by opening DNA around the lesion to allow the excision of the damaged oligonucleotide and its replacement by a new DNA fragment. In transcription, TFIIH has an essential role in transcription initiation. When the pre-initiation complex (PIC) has been established, TFIIH is required for promoter opening and promoter escape. Phosphorylation of the C-terminal tail (CTD) of the largest subunit of RNA polymerase II by the kinase module CAK controls the initiation of transcription. Its function is as follows. Stimulates the ATPase activity of TFIIH subunit XPB/ERCC3. This Homo sapiens (Human) protein is General transcription factor IIH subunit 4 (GTF2H4).